A 554-amino-acid polypeptide reads, in one-letter code: Myo-inositol transporter 1 (554 aa).

Positions 1 to 13 (MGSSTNNTQSKAT) are enriched in polar residues. The disordered stretch occupies residues 1–57 (MGSSTNNTQSKATPSVLENEVNSSKSSVVSSTSSAKGLLRETTNHGTMETSSVQISE). Asn-6 and Asn-22 each carry an N-linked (GlcNAc...) asparagine glycan. Positions 15 to 34 (SVLENEVNSSKSSVVSSTSS) are enriched in low complexity. Residues 44-57 (NHGTMETSSVQISE) show a composition bias toward polar residues. Transmembrane regions (helical) follow at residues 65 to 85 (MVLV…YDTG), 110 to 130 (FITS…GVLA), 144 to 164 (IIFV…TMIA), 167 to 187 (FVLG…ISEL), 196 to 216 (LIVT…FINW), and 227 to 247 (VSVG…WFLP). N-linked (GlcNAc...) asparagine glycosylation occurs at Asn-279. Residues 313-332 (GNFRALILACGLQGIQQFTG) traverse the membrane as a helical segment. A glycan (N-linked (GlcNAc...) asparagine) is linked at Asn-351. 5 helical membrane passes run 354 to 374 (AVSI…ICII), 382 to 402 (ILLV…VAFH), 420 to 440 (GWGI…AIGI), 459 to 479 (IGAM…ASTF), and 490 to 510 (GTFS…YFLL).

Belongs to the major facilitator superfamily. Sugar transporter (TC 2.A.1.1) family.

Its subcellular location is the cell membrane. It catalyses the reaction myo-inositol(out) + H(+)(out) = myo-inositol(in) + H(+)(in). Major transporter for myo-inositol. The protein is Myo-inositol transporter 1 of Candida albicans (strain SC5314 / ATCC MYA-2876) (Yeast).